Consider the following 247-residue polypeptide: MAAAIASGLIRQKRQAREQHWDRPSASRRRSSPSKNRGLCNGNLVDIFSKVRIFGLKKRRLRRQDPQLKGIVTRLYCRQGYYLQMHPDGALDGTKDDSTNSTLFNLIPVGLRVVAIQGVKTGLYIAMNGEGYLYPSELFTPECKFKESVFENYYVIYSSMLYRQQESGRAWFLGLNKEGQVMKGNRVKKTKPAAHFLPKPLEVAMYREPSLHDVGETVPKAGVTPSKSTSASAIMNGGKPVNKCKTT.

Disordered regions lie at residues 1-38 (MAAAIASGLIRQKRQAREQHWDRPSASRRRSSPSKNRG) and 216-247 (ETVPKAGVTPSKSTSASAIMNGGKPVNKCKTT). The segment covering 15–25 (QAREQHWDRPS) has biased composition (basic and acidic residues).

It belongs to the heparin-binding growth factors family. In terms of assembly, interacts with SCN8A.

Its subcellular location is the nucleus. In terms of biological role, probably involved in nervous system development and function. This chain is Fibroblast growth factor 14 (Fgf14), found in Rattus norvegicus (Rat).